A 512-amino-acid polypeptide reads, in one-letter code: DNA damage-binding protein CMR1 (512 aa).

The segment at 32–96 is disordered; the sequence is SQIKREAGVE…IPNVNDNQLL (65 aa). Residues 34-46 show a composition bias toward basic and acidic residues; that stretch reads IKREAGVEDEHLD. Residues 47-60 show a composition bias toward basic residues; the sequence is RKRKKKAGSAKKAV. WD repeat units lie at residues 189 to 230, 241 to 281, 289 to 329, 333 to 373, 390 to 429, 442 to 481, and 482 to 512; these read LTAE…PEDE, LFTK…SEEI, DDPL…TEIN, LSDK…NKPE, DSRL…PEDL, GRWT…LAHL, and PTAT…FLFT.

It belongs to the WD repeat DDB2/WDR76 family.

In terms of biological role, DNA-binding protein that binds to both single- and double-stranded DNA. Binds preferentially to UV-damaged DNA. May be involved in DNA-metabolic processes. The chain is DNA damage-binding protein CMR1 from Kluyveromyces lactis (strain ATCC 8585 / CBS 2359 / DSM 70799 / NBRC 1267 / NRRL Y-1140 / WM37) (Yeast).